The following is a 30-amino-acid chain: Ribosome-inactivating protein momorcochin-S (30 aa).

The protein belongs to the ribosome-inactivating protein family. Type 1 RIP subfamily. Glycosylated.

The catalysed reaction is Endohydrolysis of the N-glycosidic bond at one specific adenosine on the 28S rRNA.. Functionally, inactivates eukaryotic 60S ribosomal subunits. The protein is Ribosome-inactivating protein momorcochin-S of Momordica cochinchinensis (Spiny bitter cucumber).